The chain runs to 1074 residues: Collagen, type I, alpha 1a (1074 aa).

Residues 1 to 13 (KSPAMPVPGPMGP) are compositionally biased toward pro residues. The disordered stretch occupies residues 1-1010 (KSPAMPVPGP…PQEKAPDPYR (1010 aa)). Over residues 14–36 (MGPRSGPQGFPGEAGAAGAMGPR) the composition is skewed to low complexity. Basic and acidic residues predominate over residues 45–59 (NGEDGESGKPGRGGE). Residues 129 to 147 (TGAAGAAGARGNDGAAGAA) show a composition bias toward low complexity. Residues 149–162 (PPGPTGPAGPPGFP) show a composition bias toward pro residues. Positions 163 to 181 (GGPGAKGDAGAQGGRGPEG) are enriched in gly residues. Low complexity-rich tracts occupy residues 182-225 (PAGA…AGAP), 234-272 (SGPQ…APGV), and 290-299 (EPGAAGARGA). The segment covering 301–313 (GERGGPGGRGFPG) has biased composition (gly residues). Composition is skewed to low complexity over residues 377–392 (VGAR…PGPK), 469–530 (VPGE…QGMP), and 563–578 (RGLT…AGAT). A compositionally biased stretch (gly residues) spans 588–597 (GPVGPGGARG). Composition is skewed to low complexity over residues 611 to 647 (AGFA…AGPT) and 661 to 683 (PKGA…AGRV). Positions 685-697 (PPGPSGNPGPPGP) are enriched in pro residues. Composition is skewed to low complexity over residues 715 to 742 (PAGR…SEGA) and 803 to 823 (PGLA…SEGS). The segment covering 847-857 (APGPPGAPGPV) has biased composition (pro residues). A compositionally biased stretch (low complexity) spans 871 to 890 (PAGPAGSAGPAGPRGPAGAP). Residues 893-907 (RGDKGESGEAGERGH) show a composition bias toward basic and acidic residues. Over residues 920–956 (SGSSGEQGPAGAAGPAGPRGPAGSAGSPGKDGMSGLP) the composition is skewed to low complexity. Residues 974–986 (AGPPGPPGPPGAP) show a composition bias toward pro residues. The region spanning 1014-1074 (LEVDSTLKSL…GLEVGPVCFL (61 aa)) is the Fibrillar collagen NC1 domain.

Belongs to the fibrillar collagen family.

The protein localises to the secreted. It localises to the extracellular space. It is found in the extracellular matrix. The chain is Collagen, type I, alpha 1a from Epinephelus marginatus (Dusky grouper).